The sequence spans 115 residues: Large ribosomal subunit protein bL20 (115 aa).

The protein belongs to the bacterial ribosomal protein bL20 family.

Functionally, binds directly to 23S ribosomal RNA and is necessary for the in vitro assembly process of the 50S ribosomal subunit. It is not involved in the protein synthesizing functions of that subunit. The chain is Large ribosomal subunit protein bL20 from Synechococcus sp. (strain CC9902).